The primary structure comprises 273 residues: Dermonecrotic toxin LspaSicTox-alphaIA1ii (273 aa).

Residue H5 is part of the active site. Mg(2+) is bound by residues E25 and D27. H41 functions as the Nucleophile in the catalytic mechanism. 2 disulfides stabilise this stretch: C45–C51 and C47–C190. A Mg(2+)-binding site is contributed by D85.

The protein belongs to the arthropod phospholipase D family. Class II subfamily. Mg(2+) serves as cofactor. In terms of tissue distribution, expressed by the venom gland.

It localises to the secreted. The enzyme catalyses an N-(acyl)-sphingosylphosphocholine = an N-(acyl)-sphingosyl-1,3-cyclic phosphate + choline. The catalysed reaction is an N-(acyl)-sphingosylphosphoethanolamine = an N-(acyl)-sphingosyl-1,3-cyclic phosphate + ethanolamine. It catalyses the reaction a 1-acyl-sn-glycero-3-phosphocholine = a 1-acyl-sn-glycero-2,3-cyclic phosphate + choline. It carries out the reaction a 1-acyl-sn-glycero-3-phosphoethanolamine = a 1-acyl-sn-glycero-2,3-cyclic phosphate + ethanolamine. Dermonecrotic toxins cleave the phosphodiester linkage between the phosphate and headgroup of certain phospholipids (sphingolipid and lysolipid substrates), forming an alcohol (often choline) and a cyclic phosphate. This toxin acts on sphingomyelin (SM). It may also act on ceramide phosphoethanolamine (CPE), lysophosphatidylcholine (LPC) and lysophosphatidylethanolamine (LPE), but not on lysophosphatidylserine (LPS), and lysophosphatidylglycerol (LPG). It acts by transphosphatidylation, releasing exclusively cyclic phosphate products as second products. Induces dermonecrosis, hemolysis, increased vascular permeability, edema, inflammatory response, and platelet aggregation. This is Dermonecrotic toxin LspaSicTox-alphaIA1ii from Loxosceles spadicea (Recluse spider).